The primary structure comprises 368 residues: Ferrochelatase (368 aa).

Positions 209 and 290 each coordinate Fe cation. Positions 347–368 (REEQEQQAHISREEARRLGADQ) are disordered.

Belongs to the ferrochelatase family.

It localises to the cytoplasm. It catalyses the reaction heme b + 2 H(+) = protoporphyrin IX + Fe(2+). Its pathway is porphyrin-containing compound metabolism; protoheme biosynthesis; protoheme from protoporphyrin-IX: step 1/1. Its function is as follows. Catalyzes the ferrous insertion into protoporphyrin IX. In Janthinobacterium sp. (strain Marseille) (Minibacterium massiliensis), this protein is Ferrochelatase.